The following is a 329-amino-acid chain: NADH-quinone oxidoreductase subunit H (329 aa).

The next 9 membrane-spanning stretches (helical) occupy residues 9-29 (LIKILILVAVFSALGGFATYI), 42-62 (GPCYVGPFGLLQVAADGIKLF), 75-95 (FIFTLAPIIAMVSAFVSMAPI), 117-137 (IGFLFFLAVGAAGIYAPILAG), 154-174 (IQLLSFEVVSTLTILAPLMVV), 188-208 (GGFLDWLVFKQPLAFVLFLIA), 238-258 (LKWGMFFLAEYAHLFAFSFVI), 260-280 (IVFFGGFNAWGFIPGGLAILI), and 309-329 (WKIMLPLALLNIVLTGIIILI).

The protein belongs to the complex I subunit 1 family. As to quaternary structure, NDH-1 is composed of 14 different subunits. Subunits NuoA, H, J, K, L, M, N constitute the membrane sector of the complex.

Its subcellular location is the cell inner membrane. The enzyme catalyses a quinone + NADH + 5 H(+)(in) = a quinol + NAD(+) + 4 H(+)(out). In terms of biological role, NDH-1 shuttles electrons from NADH, via FMN and iron-sulfur (Fe-S) centers, to quinones in the respiratory chain. The immediate electron acceptor for the enzyme in this species is believed to be ubiquinone. Couples the redox reaction to proton translocation (for every two electrons transferred, four hydrogen ions are translocated across the cytoplasmic membrane), and thus conserves the redox energy in a proton gradient. This subunit may bind ubiquinone. The sequence is that of NADH-quinone oxidoreductase subunit H from Helicobacter pylori (strain G27).